Consider the following 36-residue polypeptide: MTDFNLPSIFVPLVGLVFPAIAMASLSLHVQKNKIV.

A helical membrane pass occupies residues 6–26; sequence LPSIFVPLVGLVFPAIAMASL.

The protein belongs to the PsaI family.

The protein resides in the plastid. The protein localises to the chloroplast thylakoid membrane. May help in the organization of the PsaL subunit. In Liriodendron tulipifera (Tuliptree), this protein is Photosystem I reaction center subunit VIII.